The primary structure comprises 153 residues: Superoxide dismutase [Cu-Zn] (153 aa).

H45, H47, and H62 together coordinate Cu cation. A disulfide bridge links C56 with C145. Zn(2+)-binding residues include H62, H70, H79, and D82. H119 contacts Cu cation.

Belongs to the Cu-Zn superoxide dismutase family. Homodimer. The cofactor is Cu cation. Zn(2+) is required as a cofactor.

It is found in the cytoplasm. It carries out the reaction 2 superoxide + 2 H(+) = H2O2 + O2. In terms of biological role, destroys radicals which are normally produced within the cells and which are toxic to biological systems. This Ceratitis capitata (Mediterranean fruit fly) protein is Superoxide dismutase [Cu-Zn].